Reading from the N-terminus, the 767-residue chain is Cilium assembly protein DZIP1L (767 aa).

Residues 122–144 are disordered; it reads QQRGQQELGRQADELKGVREESR. Positions 131 to 144 are enriched in basic and acidic residues; that stretch reads RQADELKGVREESR. The segment at 166-189 adopts a C2H2-type zinc-finger fold; sequence HTCHLCDKTFMNATFLRGHIQRRH. The stretch at 205–406 forms a coiled coil; sequence VEEVLEELRA…SQEEMIQSLS (202 aa). Ser426 is subject to Phosphoserine. Residues 518–767 are disordered; the sequence is SRAKERQENG…SSGQPRVPAW (250 aa). Polar residues-rich tracts occupy residues 533 to 547 and 574 to 588; these read PDGQ…STLV and RQSH…TQVS. Low complexity predominate over residues 607 to 616; sequence GPGMSTPPFS. Residues 658-675 are compositionally biased toward polar residues; sequence ENAQPPGQGSGTLVQSMV. Over residues 677 to 686 the composition is skewed to basic and acidic residues; the sequence is NLEKQLEAPA.

It belongs to the DZIP C2H2-type zinc-finger protein family. In terms of assembly, interacts with SEPTIN2.

It is found in the cytoplasm. The protein resides in the cytoskeleton. Its subcellular location is the cilium basal body. The protein localises to the microtubule organizing center. It localises to the centrosome. It is found in the centriole. In terms of biological role, involved in primary cilium formation. Probably acts as a transition zone protein required for localization of PKD1/PC1 and PKD2/PC2 to the ciliary membrane. This chain is Cilium assembly protein DZIP1L, found in Homo sapiens (Human).